Reading from the N-terminus, the 213-residue chain is tRNA (guanine-N(7)-)-methyltransferase (213 aa).

S-adenosyl-L-methionine contacts are provided by Glu44, Glu69, Asp96, and Asp118. Asp118 is an active-site residue. Substrate is bound at residue Lys122. Residues 124-129 (RHEKRR) are interaction with RNA. Residues Asp154 and 191 to 194 (TEYE) contribute to the substrate site.

Belongs to the class I-like SAM-binding methyltransferase superfamily. TrmB family. In terms of assembly, homodimer.

The catalysed reaction is guanosine(46) in tRNA + S-adenosyl-L-methionine = N(7)-methylguanosine(46) in tRNA + S-adenosyl-L-homocysteine. It functions in the pathway tRNA modification; N(7)-methylguanine-tRNA biosynthesis. Functionally, catalyzes the formation of N(7)-methylguanine at position 46 (m7G46) in tRNA. The sequence is that of tRNA (guanine-N(7)-)-methyltransferase from Bacillus subtilis (strain 168).